Reading from the N-terminus, the 960-residue chain is Cyclin-dependent kinase-like 5 (960 aa).

Positions 13–297 (FEILGVVGEG…TEQCLNHPTF (285 aa)) constitute a Protein kinase domain. ATP contacts are provided by residues 19 to 27 (VGEGAYGVV) and K42. D135 functions as the Proton acceptor in the catalytic mechanism. Disordered stretches follow at residues 300–349 (QRLL…IQNL), 382–566 (KTYQ…RHSK), 646–834 (SPQP…TQSQ), and 848–960 (ASNH…ETAL). Composition is skewed to polar residues over residues 319–336 (ESST…TALQ) and 382–402 (KTYQ…NNNI). S407 bears the Phosphoserine mark. Positions 407 to 417 (SPKEAKSKTEF) are enriched in basic and acidic residues. Polar residues-rich tracts occupy residues 434-462 (LKSN…QPNE), 473-482 (IPQSSRSPSY), and 510-548 (EPST…SGRN). S479 carries the post-translational modification Phosphoserine. 2 stretches are compositionally biased toward basic and acidic residues: residues 549-559 (NRNEGTLDSRR) and 679-704 (QKSE…RHLY). Position 720 is a phosphoserine (S720). Polar residues predominate over residues 728 to 748 (HENNVSTRVSSLPSESSSGTN). S761 is subject to Phosphoserine. Residues 769–778 (EQLKEKEKQG) show a composition bias toward basic and acidic residues. Residues 791–816 (QTVPNSDSPDLLTLQKSIHSASTPSS) are compositionally biased toward polar residues. Residues 817-827 (RPKEWRPEKIS) show a composition bias toward basic and acidic residues. Polar residues-rich tracts occupy residues 862–872 (LTAQQTKNSFS), 880–890 (SQASGGSSNIR), and 914–928 (SSVT…SYSE).

The protein belongs to the protein kinase superfamily. CMGC Ser/Thr protein kinase family. CDC2/CDKX subfamily. As to quaternary structure, interacts with MECP2. Post-translationally, autophosphorylated. In terms of tissue distribution, expressed in brain, lung, kidney, prostate, ovary, placenta, pancreas and testis. As to expression, predominant transcript in brain.

The protein localises to the nucleus. Its subcellular location is the cytoplasm. It localises to the cytoskeleton. The protein resides in the cilium basal body. It is found in the microtubule organizing center. The protein localises to the centrosome. The catalysed reaction is L-seryl-[protein] + ATP = O-phospho-L-seryl-[protein] + ADP + H(+). It carries out the reaction L-threonyl-[protein] + ATP = O-phospho-L-threonyl-[protein] + ADP + H(+). Its function is as follows. Mediates phosphorylation of MECP2. May regulate ciliogenesis. The chain is Cyclin-dependent kinase-like 5 from Homo sapiens (Human).